The sequence spans 199 residues: Pathogenesis-related 5 protein Cup a 3 (199 aa).

Disulfide bonds link C9-C198, C50-C60, C65-C71, C113-C187, C118-C171, C126-C136, C140-C149, and C150-C158.

This sequence belongs to the thaumatin family. In terms of tissue distribution, expressed in pollen.

Its subcellular location is the secreted. It is found in the extracellular space. It localises to the extracellular matrix. The protein resides in the pollen coat. The protein localises to the cytoplasm. Its subcellular location is the nucleus. It is found in the mitochondrion. It localises to the endoplasmic reticulum. The protein resides in the golgi apparatus. The protein localises to the golgi stack. Its subcellular location is the vesicle. It is found in the vacuole. In Hesperocyparis arizonica (Arizona cypress), this protein is Pathogenesis-related 5 protein Cup a 3.